A 152-amino-acid chain; its full sequence is Superoxide dismutase [Cu-Zn] (152 aa).

Positions 45, 47, and 62 each coordinate Cu cation. Cys-56 and Cys-145 are disulfide-bonded. His-62, His-70, His-79, and Asp-82 together coordinate Zn(2+). His-119 is a binding site for Cu cation.

It belongs to the Cu-Zn superoxide dismutase family. In terms of assembly, homodimer. Cu cation is required as a cofactor. It depends on Zn(2+) as a cofactor.

It localises to the cytoplasm. The enzyme catalyses 2 superoxide + 2 H(+) = H2O2 + O2. Functionally, destroys radicals which are normally produced within the cells and which are toxic to biological systems. This is Superoxide dismutase [Cu-Zn] (SODCC) from Zantedeschia aethiopica (White calla lily).